The sequence spans 549 residues: Plant intracellular Ras-group-related LRR protein 4 (549 aa).

Over residues 119–140 (SPSSNGSVSSRPPLPPATTTAA) the composition is skewed to low complexity. The interval 119–167 (SPSSNGSVSSRPPLPPATTTAARSDSQSSLNFSERAPVRPKDMVSRDDS) is disordered. Residues 141 to 150 (RSDSQSSLNF) are compositionally biased toward polar residues. Residues 154–167 (APVRPKDMVSRDDS) are compositionally biased toward basic and acidic residues. Serine 167 carries the post-translational modification Phosphoserine. 11 LRR repeats span residues 245-268 (LSSL…IGGL), 269-291 (SSLT…IGEL), 293-313 (NLVY…AFSR), 314-337 (LVRL…IGSL), 339-360 (SLKK…IGGC), 362-383 (SLIE…IGKI), 384-406 (TTLE…MSSL), 407-430 (ASLK…CFAT), 432-454 (LVKL…IGNL), 455-476 (EMLE…SFKM), and 478-500 (TKLR…IAEK). The short motif at 501–508 (GPQAVVQY) is the GVYW; degenerate element.

It belongs to the SHOC2 family. In terms of tissue distribution, widely expressed.

Its function is as follows. Leucine-rich repeat protein that likely mediates protein interactions, possibly in the context of signal transduction. In Arabidopsis thaliana (Mouse-ear cress), this protein is Plant intracellular Ras-group-related LRR protein 4 (PIRL4).